A 96-amino-acid chain; its full sequence is ESAT-6-like protein EsxR (96 aa).

It belongs to the WXG100 family. ESAT-6 subfamily.

The protein resides in the secreted. In Mycobacterium bovis (strain ATCC BAA-935 / AF2122/97), this protein is ESAT-6-like protein EsxR.